A 1114-amino-acid polypeptide reads, in one-letter code: Constitutive coactivator of PPAR-gamma-like protein 1 (1114 aa).

An interaction with YES1, SRC and FYN region spans residues 339–402; it reads PPHYLARPNP…YNLAEPALTL (64 aa). Disordered stretches follow at residues 372 to 396 and 411 to 519; these read QAKP…YNLA and EQNY…GNQI. Polar residues predominate over residues 431–443; it reads SPINPAPSGSPNH. Over residues 477-498 the composition is skewed to basic and acidic residues; that stretch reads GWEKTGSHSEPQARGDPGDQTK. The segment covering 499–510 has biased composition (polar residues); sequence AEGSSTASSGSQ. Threonine 651 carries the phosphothreonine modification. The RNA binding stretch occupies residues 825 to 1114; sequence AEQAAKVEKM…LEAAVLKKEE (290 aa). Omega-N-methylarginine occurs at positions 869, 880, and 882. The interval 918 to 940 is disordered; that stretch reads FSGSDSSRTSKSQGGIQPIPSQG. Lysine 928 is modified (N6-acetyllysine). Over residues 929-940 the composition is skewed to low complexity; sequence SQGGIQPIPSQG. Phosphoserine is present on serine 956. Omega-N-methylarginine occurs at positions 978 and 982. The segment at 1009-1099 is disordered; it reads AIQGKPPYAA…LNALSTDSGC (91 aa). At serine 1019 the chain carries Phosphoserine. The segment covering 1022–1033 has biased composition (basic and acidic residues); it reads EVAKELKSRSGE. The segment covering 1034–1043 has biased composition (polar residues); that stretch reads SKSSAMSSDG. A phosphoserine mark is found at serine 1040, serine 1041, and serine 1044. Polar residues predominate over residues 1060–1097; the sequence is MNGSAGDTRAPSHSESALNNDSKTCNTNPHLNALSTDS.

The protein belongs to the constitutive coactivator of PPAR-gamma family. As to quaternary structure, interacts with PURA. Interacts with YES1, SRC, FYN. Upon tyrosine phosphorylation, interacts with PIK3R1. Arg-978 is dimethylated, probably to asymmetric dimethylarginine. In terms of processing, phosphorylated on tyrosine by src family kinases upon ultraviolet exposure.

It is found in the cytoplasm. The protein localises to the cell membrane. Functionally, component of the oxidative stress-induced survival signaling. May regulate the activation of SRC family protein kinases. May act as a scaffolding protein enabling SRC family protein kinases to phosphorylate and activate PI3-kinase. Binds IGF2 RNA and promotes the production of IGF2 protein. The polypeptide is Constitutive coactivator of PPAR-gamma-like protein 1 (FAM120A) (Bos taurus (Bovine)).